The following is a 62-amino-acid chain: Large ribosomal subunit protein bL28 (62 aa).

The interval 1 to 22 (MGKQCFVTGRKASTGNRRSHAL) is disordered.

It belongs to the bacterial ribosomal protein bL28 family.

The polypeptide is Large ribosomal subunit protein bL28 (Staphylococcus aureus (strain N315)).